The chain runs to 424 residues: Magnesium-chelatase subunit ChlI-1, chloroplastic (424 aa).

A chloroplast-targeting transit peptide spans 1–60 (MASLLGTSSSAIWASPSLSSPSSKPSSSPICFRPGKLFGSKLNAGIQIRPKKNRSRYHVS). Val-61 bears the N-acetylvaline mark. 2 disulfide bridges follow: Cys-102–Cys-193 and Cys-354–Cys-396. Position 119–126 (119–126 (GDRGTGKS)) interacts with ATP. A Phosphoserine modification is found at Ser-355.

The protein belongs to the Mg-chelatase subunits D/I family. As to quaternary structure, the magnesium chelatase complex is a heterotrimer consisting of subunits CHLI, CHLD and CHLH. Interacts with CHLH and CHLD.

It is found in the plastid. The protein localises to the chloroplast. The enzyme catalyses protoporphyrin IX + Mg(2+) + ATP + H2O = Mg-protoporphyrin IX + ADP + phosphate + 3 H(+). The protein operates within porphyrin-containing compound metabolism; chlorophyll biosynthesis. Redox regulation; active in reducing conditions, inactive in oxidizing conditions. Thioredoxins f and m mediate the reversible reductive activation of oxidized CHLI1. In terms of biological role, involved in chlorophyll biosynthesis. Catalyzes the insertion of magnesium ion into protoporphyrin IX to yield Mg-protoporphyrin IX. The magnesium-chelatase is a complex of three subunits, CHLI, CHLD and CHLH. The reaction takes place in two steps, with an ATP-dependent activation followed by an ATP-dependent chelation step. Possesses high affinity for ATP and may play a major role in chlorophyll biosynthesis. Does not bind abscisic acid (ABA), but is a positive regulator of ABA signaling. May be involved in ABA signaling in the control of stomatal aperture, but does not seem to have an effect on ABA-induced gene expression. This is Magnesium-chelatase subunit ChlI-1, chloroplastic (CHLI1) from Arabidopsis thaliana (Mouse-ear cress).